Consider the following 724-residue polypeptide: Phosphoribosylformylglycinamidine synthase subunit PurL (724 aa).

H34 is an active-site residue. Residues Y37 and K75 each contribute to the ATP site. E77 contributes to the Mg(2+) binding site. Residues 78–81 and R100 contribute to the substrate site; that span reads SHNH. H79 functions as the Proton acceptor in the catalytic mechanism. D101 serves as a coordination point for Mg(2+). Q221 lines the substrate pocket. D249 is a binding site for Mg(2+). 292–294 lines the substrate pocket; that stretch reads ESQ. Positions 478 and 515 each coordinate ATP. S518 serves as a coordination point for substrate.

The protein belongs to the FGAMS family. Monomer. Part of the FGAM synthase complex composed of 1 PurL, 1 PurQ and 2 PurS subunits.

Its subcellular location is the cytoplasm. The catalysed reaction is N(2)-formyl-N(1)-(5-phospho-beta-D-ribosyl)glycinamide + L-glutamine + ATP + H2O = 2-formamido-N(1)-(5-O-phospho-beta-D-ribosyl)acetamidine + L-glutamate + ADP + phosphate + H(+). It participates in purine metabolism; IMP biosynthesis via de novo pathway; 5-amino-1-(5-phospho-D-ribosyl)imidazole from N(2)-formyl-N(1)-(5-phospho-D-ribosyl)glycinamide: step 1/2. Functionally, part of the phosphoribosylformylglycinamidine synthase complex involved in the purines biosynthetic pathway. Catalyzes the ATP-dependent conversion of formylglycinamide ribonucleotide (FGAR) and glutamine to yield formylglycinamidine ribonucleotide (FGAM) and glutamate. The FGAM synthase complex is composed of three subunits. PurQ produces an ammonia molecule by converting glutamine to glutamate. PurL transfers the ammonia molecule to FGAR to form FGAM in an ATP-dependent manner. PurS interacts with PurQ and PurL and is thought to assist in the transfer of the ammonia molecule from PurQ to PurL. The sequence is that of Phosphoribosylformylglycinamidine synthase subunit PurL from Caldivirga maquilingensis (strain ATCC 700844 / DSM 13496 / JCM 10307 / IC-167).